We begin with the raw amino-acid sequence, 2332 residues long: Genome polyprotein (2332 aa).

The region spanning methionine 1–lysine 201 is the Peptidase C28 domain. Residues methionine 1–leucine 1480 are Cytoplasmic-facing. Catalysis depends on for leader protease activity residues cysteine 51, histidine 148, and aspartate 163. 2 disordered regions span residues glutamine 197–asparagine 218 and glutamine 238–asparagine 265. The N-myristoyl glycine; by host moiety is linked to residue glycine 202. Composition is skewed to polar residues over residues glycine 204–asparagine 218 and glutamine 238–glycine 251. The span at serine 252 to asparagine 265 shows a compositional bias: low complexity. A disulfide bridge connects residues cysteine 406 and cysteine 858. The segment at alanine 788–tyrosine 796 is antigenic epitope. A Cell attachment site motif is present at residues arginine 869–aspartate 871. An SF3 helicase domain is found at asparagine 1189–aspartate 1353. Glycine 1217–serine 1224 lines the ATP pocket. The stretch at lysine 1481–isoleucine 1501 is an intramembrane region. Over arginine 1502 to alanine 2332 the chain is Cytoplasmic. Residues lysine 1529–proline 1538 are compositionally biased toward basic and acidic residues. The tract at residues lysine 1529 to proline 1584 is disordered. O-(5'-phospho-RNA)-tyrosine occurs at positions 1581, 1604, and 1628. Positions alanine 1652–leucine 1848 constitute a Peptidase C3 domain. The For protease 3C activity; Proton donor/acceptor role is filled by histidine 1695. Residues aspartate 1733 and cysteine 1812 each act as for protease 3C activity in the active site. Short sequence motifs (nuclear localization signal) lie at residues methionine 1878–threonine 1886 and arginine 1879–threonine 1886. One can recognise a RdRp catalytic domain in the interval arginine 2096–alanine 2214. The active-site For RdRp activity is aspartate 2200.

This sequence belongs to the picornaviruses polyprotein family. Interacts with host ISG15. In terms of assembly, interacts (via R-G-D motif) with host ITGAV/ITGB6. Interacts with host MAVS; this interaction inhibits binding of host TRAF3 to MAVS, thereby suppressing interferon-mediated responses. As to quaternary structure, forms homooligomers. Homohexamer. Interacts with host VIM. Interacts with host BECN1. In terms of assembly, interacts with host DCTN3. As to quaternary structure, interacts with RNA-dependent RNA polymerase; this interaction allows 3B-1 to binds 2 polymerases and act as a primer. It also allows the recruitment of the RNA-dependent RNA polymerase to host membranes. Interacts with RNA-dependent RNA polymerase; this interaction allows 3B-2 to act as a primer. In terms of assembly, interacts with RNA-dependent RNA polymerase; this interaction allows 3B-3 to act as a primer. As to quaternary structure, interacts with 3B-1; this interaction allows 3B-1 to binds 2 polymerases and act as a primer. It also allows the recruitment of the RNA-dependent RNA polymerase to host membranes. Interacts with 3B-2; this interaction allows 3B-2 to act as a primer. Interacts with 3B-3; this interaction allows 3B-3 to act as a primer. Removes six residues from its own C-terminus, generating sLb(pro). In terms of processing, specific enzymatic cleavages in vivo by the viral proteases yield a variety of precursors and mature proteins. The polyprotein seems to be cotranslationally cleaved at the 2A/2B junction by a ribosomal skip from one codon to the next without formation of a peptide bond. This process would release the L-P1-2A peptide from the translational complex. Post-translationally, during virion maturation, immature virions are rendered infectious following cleavage of VP0 into VP4 and VP2. This maturation seems to be an autocatalytic event triggered by the presence of RNA in the capsid and is followed by a conformational change of the particle. Myristoylation is required during RNA encapsidation and formation of the mature virus particle. In terms of processing, uridylylated by the polymerase and covalently linked to the 5'-end of genomic RNA. These uridylylated forms act as a nucleotide-peptide primer for the polymerase. Post-translationally, the disulfide bond between VP1 and VP2 occurs after release of virus from the host cell.

The protein localises to the host nucleus. Its subcellular location is the host cytoplasm. It localises to the virion. The protein resides in the host endoplasmic reticulum membrane. It is found in the host cytoplasmic vesicle membrane. It catalyses the reaction Autocatalytically cleaves itself from the polyprotein of the foot-and-mouth disease virus by hydrolysis of a Lys-|-Gly bond, but then cleaves host cell initiation factor eIF-4G at bonds -Gly-|-Arg- and -Lys-|-Arg-.. It carries out the reaction a ribonucleoside 5'-triphosphate + H2O = a ribonucleoside 5'-diphosphate + phosphate + H(+). The enzyme catalyses RNA(n) + a ribonucleoside 5'-triphosphate = RNA(n+1) + diphosphate. The catalysed reaction is Selective cleavage of Gln-|-Gly bond in the poliovirus polyprotein. In other picornavirus reactions Glu may be substituted for Gln, and Ser or Thr for Gly.. Its function is as follows. Autocatalytically cleaves itself from the polyprotein at the L/VP0 junction. Also cleaves the host translation initiation factors EIF4G1 and EIF4G3, in order to shut off the capped cellular mRNA transcription. Plays a role in counteracting host innate antiviral response using diverse mechanisms. Possesses a deubiquitinase activity acting on both 'Lys-48' and 'Lys-63'-linked polyubiquitin chains. In turn, inhibits the ubiquitination and subsequent activation of key signaling molecules of type I IFN response such as host RIGI, TBK1, TRAF3 and TRAF6. Inhibits host NF-kappa-B activity by inducing a decrease in RELA mRNA levels. Cleaves a peptide bond in the C-terminus of host ISG15, resulting in the damaging of this modifier that can no longer be attached to target proteins. Also cleaves host G3BP1 and G3BP2 in order to inhibit cytoplasmic stress granules assembly. Lies on the inner surface of the capsid shell. After binding to the host receptor, the capsid undergoes conformational changes. Capsid protein VP4 is released, capsid protein VP1 N-terminus is externalized, and together, they shape a pore in the host membrane through which the viral genome is translocated into the host cell cytoplasm. After genome has been released, the channel shrinks. In terms of biological role, forms an icosahedral capsid of pseudo T=3 symmetry with capsid proteins VP1 and VP3. The capsid is composed of 60 copies of each capsid protein organized in the form of twelve pentamers and encloses the viral positive strand RNA genome. Upon acidifcation in the endosome, dissociates into pentamers. Functionally, forms an icosahedral capsid of pseudo T=3 symmetry with capsid proteins VP2 and VP3. The capsid is composed of 60 copies of each capsid protein organized in the form of twelve pentamers and encloses the viral positive strand RNA genome. Mediates cell entry by attachment to an integrin receptor, usually host ITGAV/ITGB6, via a conserved arginine-glycine-aspartic acid (R-G-D) motif. In addition, targets host MAVS to suppress type I IFN pathway. Upon acidifcation in the endosome, dissociates into pentamers. Its function is as follows. Forms an icosahedral capsid of pseudo T=3 symmetry with capsid proteins VP0 and VP3. The capsid is composed of 60 copies of each capsid protein organized in the form of twelve pentamers and encloses the viral positive strand RNA genome. Upon acidifcation in the endosome, dissociates into pentamers. Mediates self-processing of the polyprotein by a translational effect termed 'ribosome skipping'. Mechanistically, 2A-mediated cleavage occurs between the C-terminal glycine and the proline of the downstream protein 2B. In the case of foot-and-mouth disease virus, the 2A oligopeptide is post-translationally 'trimmed' from the C-terminus of the upstream protein 1D by 3C proteinase. In terms of biological role, plays an essential role in the virus replication cycle by acting as a viroporin. Creates a pore in the host endoplasmic reticulum and as a consequence releases Ca2+ in the cytoplasm of infected cell. In turn, high levels of cytoplasmic calcium may trigger membrane trafficking and transport of viral ER-associated proteins to viroplasms, sites of viral genome replication. Functionally, associates with and induces structural rearrangements of intracellular membranes. Triggers host autophagy by interacting with host BECN1 and thereby promotes viral replication. Participates in viral replication and interacts with host DHX9. Displays RNA-binding, nucleotide binding and NTPase activities. May play a role in virion morphogenesis and viral RNA encapsidation by interacting with the capsid protein VP3. Its function is as follows. Plays important roles in virus replication, virulence and host range. Cooperates with host DDX56 to inhibit IRF3 nuclear translocation and subsequent type I interferon production. Covalently linked to the 5'-end of both the positive-strand and negative-strand genomic RNAs. Acts as a genome-linked replication primer. In terms of biological role, cysteine protease that generates mature viral proteins from the precursor polyprotein. In addition to its proteolytic activity, binds to viral RNA and thus influences viral genome replication. RNA and substrate bind cooperatively to the protease. Functionally, RNA-directed RNA polymerase 3D-POL replicates genomic and antigenomic RNA by recognizing replications specific signals. Covalently attaches UMP to a tyrosine of VPg, which is used to prime RNA synthesis. The positive stranded RNA genome is first replicated at virus induced membranous vesicles, creating a dsRNA genomic replication form. This dsRNA is then used as template to synthesize positive stranded RNA genomes. ss(+)RNA genomes are either translated, replicated or encapsidated. The chain is Genome polyprotein from Bos taurus (Bovine).